The primary structure comprises 349 residues: DNA-directed RNA polymerase subunit alpha (349 aa).

The alpha N-terminal domain (alpha-NTD) stretch occupies residues 1–226 (MLIAQRPTLI…GLFGLAQELN (226 aa)). Residues 241–349 (AALAADLALP…GAEFIETEQY (109 aa)) are alpha C-terminal domain (alpha-CTD). Residues 309-349 (KDSPPGFDPRQAVDTYGTDAYSPSFSDPSDDGAEFIETEQY) are disordered. Residues 336-349 (PSDDGAEFIETEQY) are compositionally biased toward acidic residues.

Belongs to the RNA polymerase alpha chain family. In terms of assembly, homodimer. The RNAP catalytic core consists of 2 alpha, 1 beta, 1 beta' and 1 omega subunit. When a sigma factor is associated with the core the holoenzyme is formed, which can initiate transcription.

The enzyme catalyses RNA(n) + a ribonucleoside 5'-triphosphate = RNA(n+1) + diphosphate. DNA-dependent RNA polymerase catalyzes the transcription of DNA into RNA using the four ribonucleoside triphosphates as substrates. The polypeptide is DNA-directed RNA polymerase subunit alpha (Frankia casuarinae (strain DSM 45818 / CECT 9043 / HFP020203 / CcI3)).